A 594-amino-acid chain; its full sequence is Arginine--tRNA ligase (594 aa).

A 'HIGH' region motif is present at residues 139-149; it reads ANPTGPLHVGH.

It belongs to the class-I aminoacyl-tRNA synthetase family. As to quaternary structure, monomer.

It is found in the cytoplasm. The enzyme catalyses tRNA(Arg) + L-arginine + ATP = L-arginyl-tRNA(Arg) + AMP + diphosphate. The polypeptide is Arginine--tRNA ligase (Burkholderia mallei (strain NCTC 10247)).